The chain runs to 402 residues: NADH-quinone oxidoreductase subunit D (402 aa).

Belongs to the complex I 49 kDa subunit family. In terms of assembly, NDH-1 is composed of 14 different subunits. Subunits NuoB, C, D, E, F, and G constitute the peripheral sector of the complex.

The protein resides in the cell inner membrane. The enzyme catalyses a quinone + NADH + 5 H(+)(in) = a quinol + NAD(+) + 4 H(+)(out). NDH-1 shuttles electrons from NADH, via FMN and iron-sulfur (Fe-S) centers, to quinones in the respiratory chain. The immediate electron acceptor for the enzyme in this species is believed to be ubiquinone. Couples the redox reaction to proton translocation (for every two electrons transferred, four hydrogen ions are translocated across the cytoplasmic membrane), and thus conserves the redox energy in a proton gradient. The chain is NADH-quinone oxidoreductase subunit D from Xanthobacter autotrophicus (strain ATCC BAA-1158 / Py2).